We begin with the raw amino-acid sequence, 771 residues long: UPF0313 protein PSPTO_4928 (771 aa).

Residues 371-649 (AYDMIRFSVN…KAFLRYHDPK (279 aa)) form the Radical SAM core domain. [4Fe-4S] cluster is bound by residues Cys-385, Cys-389, and Cys-392. The disordered stretch occupies residues 683 to 771 (DTYQSARRKN…KPARKPVVPR (89 aa)). Composition is skewed to basic and acidic residues over residues 726–735 (KPWDKREEAK) and 745–754 (AAKERMDAAK). A compositionally biased stretch (basic residues) spans 756 to 765 (GKGKGGKPAR).

Belongs to the UPF0313 family. The cofactor is [4Fe-4S] cluster.

This is UPF0313 protein PSPTO_4928 from Pseudomonas syringae pv. tomato (strain ATCC BAA-871 / DC3000).